Here is a 122-residue protein sequence, read N- to C-terminus: Large ribosomal subunit protein uL14 (122 aa).

This sequence belongs to the universal ribosomal protein uL14 family. As to quaternary structure, part of the 50S ribosomal subunit. Forms a cluster with proteins L3 and L19. In the 70S ribosome, L14 and L19 interact and together make contacts with the 16S rRNA in bridges B5 and B8.

Binds to 23S rRNA. Forms part of two intersubunit bridges in the 70S ribosome. The chain is Large ribosomal subunit protein uL14 from Thermoanaerobacter pseudethanolicus (strain ATCC 33223 / 39E) (Clostridium thermohydrosulfuricum).